We begin with the raw amino-acid sequence, 176 residues long: NAD(P)H-quinone oxidoreductase subunit 6, chloroplastic (176 aa).

5 consecutive transmembrane segments (helical) span residues 10–30 (FLLV…VLLP), 32–52 (PIYS…FYIL), 61–81 (AQLL…VMFM), 92–112 (LWTV…ISLI), and 152–172 (FFLP…GAIA).

The protein belongs to the complex I subunit 6 family. In terms of assembly, NDH is composed of at least 16 different subunits, 5 of which are encoded in the nucleus.

Its subcellular location is the plastid. The protein localises to the chloroplast thylakoid membrane. The catalysed reaction is a plastoquinone + NADH + (n+1) H(+)(in) = a plastoquinol + NAD(+) + n H(+)(out). It catalyses the reaction a plastoquinone + NADPH + (n+1) H(+)(in) = a plastoquinol + NADP(+) + n H(+)(out). NDH shuttles electrons from NAD(P)H:plastoquinone, via FMN and iron-sulfur (Fe-S) centers, to quinones in the photosynthetic chain and possibly in a chloroplast respiratory chain. The immediate electron acceptor for the enzyme in this species is believed to be plastoquinone. Couples the redox reaction to proton translocation, and thus conserves the redox energy in a proton gradient. This chain is NAD(P)H-quinone oxidoreductase subunit 6, chloroplastic (ndhG), found in Nicotiana tabacum (Common tobacco).